We begin with the raw amino-acid sequence, 532 residues long: Membrane protein insertase YidC (532 aa).

The next 5 membrane-spanning stretches (helical) occupy residues 7–27 (FFIFAFLFVSFLLWQAWQSQM), 336–356 (LTILYSIIGNWGFSIILITFI), 413–433 (GGFLPIFIQMPIFLSLYYMLI), 450–470 (LSSQDPYYVLPVIMGLTMFFI), and 492–512 (PVIFTAFFLWFPSGLVLYYII).

Belongs to the OXA1/ALB3/YidC family. Type 1 subfamily. Interacts with the Sec translocase complex via SecD. Specifically interacts with transmembrane segments of nascent integral membrane proteins during membrane integration.

It is found in the cell membrane. Functionally, required for the insertion and/or proper folding and/or complex formation of integral membrane proteins into the membrane. Involved in integration of membrane proteins that insert both dependently and independently of the Sec translocase complex, as well as at least some lipoproteins. Aids folding of multispanning membrane proteins. In Buchnera aphidicola subsp. Acyrthosiphon pisum (strain Tuc7), this protein is Membrane protein insertase YidC.